Here is a 337-residue protein sequence, read N- to C-terminus: tRNA N6-adenosine threonylcarbamoyltransferase (337 aa).

Residues His-111 and His-115 each contribute to the Fe cation site. Substrate is bound by residues Leu-134–Gly-138, Asp-167, Gly-180, and Asn-272. Asp-300 is a Fe cation binding site.

This sequence belongs to the KAE1 / TsaD family. Fe(2+) serves as cofactor.

The protein resides in the cytoplasm. The enzyme catalyses L-threonylcarbamoyladenylate + adenosine(37) in tRNA = N(6)-L-threonylcarbamoyladenosine(37) in tRNA + AMP + H(+). Its function is as follows. Required for the formation of a threonylcarbamoyl group on adenosine at position 37 (t(6)A37) in tRNAs that read codons beginning with adenine. Is involved in the transfer of the threonylcarbamoyl moiety of threonylcarbamoyl-AMP (TC-AMP) to the N6 group of A37, together with TsaE and TsaB. TsaD likely plays a direct catalytic role in this reaction. In Erwinia tasmaniensis (strain DSM 17950 / CFBP 7177 / CIP 109463 / NCPPB 4357 / Et1/99), this protein is tRNA N6-adenosine threonylcarbamoyltransferase.